The chain runs to 558 residues: Oxygen-dependent choline dehydrogenase (558 aa).

8-37 serves as a coordination point for FAD; that stretch reads DYIIIGAGSAGNVLATRLTEDSDVSVLLLE. The Proton acceptor role is filled by His475.

It belongs to the GMC oxidoreductase family. It depends on FAD as a cofactor.

It catalyses the reaction choline + A = betaine aldehyde + AH2. The enzyme catalyses betaine aldehyde + NAD(+) + H2O = glycine betaine + NADH + 2 H(+). The protein operates within amine and polyamine biosynthesis; betaine biosynthesis via choline pathway; betaine aldehyde from choline (cytochrome c reductase route): step 1/1. Involved in the biosynthesis of the osmoprotectant glycine betaine. Catalyzes the oxidation of choline to betaine aldehyde and betaine aldehyde to glycine betaine at the same rate. The protein is Oxygen-dependent choline dehydrogenase of Chromohalobacter salexigens (strain ATCC BAA-138 / DSM 3043 / CIP 106854 / NCIMB 13768 / 1H11).